Reading from the N-terminus, the 228-residue chain is Ankyrin repeat domain-containing protein 46 (228 aa).

4 ANK repeats span residues Gln-11–Ile-40, Arg-44–Ala-73, Gln-77–Ile-103, and Gln-107–Gly-138. The helical transmembrane segment at Val-195–Gly-215 threads the bilayer.

It is found in the membrane. The chain is Ankyrin repeat domain-containing protein 46 (ANKRD46) from Bos taurus (Bovine).